Consider the following 242-residue polypeptide: 1-(5-phosphoribosyl)-5-[(5-phosphoribosylamino)methylideneamino] imidazole-4-carboxamide isomerase (242 aa).

Residue D8 is the Proton acceptor of the active site. D129 serves as the catalytic Proton donor.

This sequence belongs to the HisA/HisF family.

It is found in the cytoplasm. It carries out the reaction 1-(5-phospho-beta-D-ribosyl)-5-[(5-phospho-beta-D-ribosylamino)methylideneamino]imidazole-4-carboxamide = 5-[(5-phospho-1-deoxy-D-ribulos-1-ylimino)methylamino]-1-(5-phospho-beta-D-ribosyl)imidazole-4-carboxamide. It functions in the pathway amino-acid biosynthesis; L-histidine biosynthesis; L-histidine from 5-phospho-alpha-D-ribose 1-diphosphate: step 4/9. The protein is 1-(5-phosphoribosyl)-5-[(5-phosphoribosylamino)methylideneamino] imidazole-4-carboxamide isomerase of Erythrobacter litoralis (strain HTCC2594).